A 320-amino-acid chain; its full sequence is Annexin A5 (320 aa).

N-acetylalanine is present on Ala2. Annexin repeat units lie at residues 15-86, 87-158, 170-242, and 246-317; these read FDER…ALMK, PSRL…VLLQ, AQVE…AVVK, and SIPA…LLCG. Residue Lys29 forms a Glycyl lysine isopeptide (Lys-Gly) (interchain with G-Cter in SUMO1); alternate linkage. Residue Lys29 forms a Glycyl lysine isopeptide (Lys-Gly) (interchain with G-Cter in SUMO2); alternate linkage. Ser37 carries the phosphoserine modification. Residues Lys70, Lys76, Lys79, Lys97, and Lys101 each carry the N6-acetyllysine modification. The residue at position 290 (Lys290) is an N6-succinyllysine. A [IL]-x-C-x-x-[DE] motif motif is present at residues 314 to 319; the sequence is LLCGED.

It belongs to the annexin family. In terms of assembly, monomer. Binds ATRX and EIF5B. Interacts with hepatitis B virus (HBV). Post-translationally, S-nitrosylation is induced by interferon-gamma and oxidatively-modified low-densitity lipoprotein (LDL(ox)) possibly implicating the iNOS-S100A8/9 transnitrosylase complex.

In terms of biological role, this protein is an anticoagulant protein that acts as an indirect inhibitor of the thromboplastin-specific complex, which is involved in the blood coagulation cascade. The protein is Annexin A5 (ANXA5) of Homo sapiens (Human).